Reading from the N-terminus, the 197-residue chain is MEHYLSLFIKSVFIENMALSFFLGMCTFLAVSKKVSTAFGLGVAVIFVLGLSVPVNQLVYSLLKDGAIAEGVDLTFLKFITFIGVIAALVQILEMFLDKFVPALYNALGIYLPLITVNCAIFGAVSFMAQREYNFGESVVYGFGAGLGWMLAIVALAGITEKMKYSDAPKGLKGLGITFIAAGLMAMAFMSFSGIQL.

Transmembrane regions (helical) follow at residues 11 to 31 (SVFI…FLAV), 35 to 55 (VSTA…SVPV), 76 to 96 (FLKF…LEMF), 108 to 128 (LGIY…VSFM), 139 to 159 (VVYG…LAGI), and 175 to 195 (LGIT…FSGI).

This sequence belongs to the NqrDE/RnfAE family. In terms of assembly, composed of six subunits; NqrA, NqrB, NqrC, NqrD, NqrE and NqrF.

The protein resides in the cell inner membrane. The catalysed reaction is a ubiquinone + n Na(+)(in) + NADH + H(+) = a ubiquinol + n Na(+)(out) + NAD(+). NQR complex catalyzes the reduction of ubiquinone-1 to ubiquinol by two successive reactions, coupled with the transport of Na(+) ions from the cytoplasm to the periplasm. NqrA to NqrE are probably involved in the second step, the conversion of ubisemiquinone to ubiquinol. The protein is Na(+)-translocating NADH-quinone reductase subunit E of Neisseria meningitidis serogroup B (strain ATCC BAA-335 / MC58).